The following is a 148-amino-acid chain: Lysozyme C (148 aa).

The N-terminal stretch at 1 to 18 (MKALIVLGLVLLSVTVQG) is a signal peptide. The C-type lysozyme domain maps to 19-148 (KVFERCELAR…VRQYVQGCGV (130 aa)). 4 cysteine pairs are disulfide-bonded: cysteine 24/cysteine 146, cysteine 48/cysteine 134, cysteine 83/cysteine 99, and cysteine 95/cysteine 113. Active-site residues include glutamate 53 and aspartate 71.

Belongs to the glycosyl hydrolase 22 family. In terms of assembly, monomer.

The protein resides in the secreted. It catalyses the reaction Hydrolysis of (1-&gt;4)-beta-linkages between N-acetylmuramic acid and N-acetyl-D-glucosamine residues in a peptidoglycan and between N-acetyl-D-glucosamine residues in chitodextrins.. Functionally, lysozymes have primarily a bacteriolytic function; those in tissues and body fluids are associated with the monocyte-macrophage system and enhance the activity of immunoagents. The sequence is that of Lysozyme C (LYZ) from Homo sapiens (Human).